A 925-amino-acid chain; its full sequence is Nuclear factor of activated T-cells, cytoplasmic 2 (925 aa).

Residues 1–95 (MNAPERQPQP…FGEPDRVGPQ (95 aa)) are disordered. Position 23 is a phosphoserine (Ser23). A 9aaTAD motif is present at residues 26–34 (DELDFSILF). Phosphoserine is present on residues Ser99, Ser107, and Ser110. A calcineurin-binding region spans residues 111–116 (PRIEIT). The interval 119–199 (HELIQAVGPL…CVSPNNGGPD (81 aa)) is transactivation domain A (TAD-A). Phosphoserine occurs at positions 148, 168, 171, 172, 174, 175, 177, and 180. Positions 161–175 (YREPLCLSPASSGSS) are required for cytoplasmic retention of the phosphorylated form. 2 consecutive repeat copies span residues 184–200 (SPYTSPCVSPNNGGPDD) and 213–229 (SPRTSPIMSPRTSLAED). The 3 X approximate SP repeats stretch occupies residues 184–286 (SPYTSPCVSP…PQPSSHVAPQ (103 aa)). Residues 195–297 (NGGPDDLCPQ…HGSPAGYPPV (103 aa)) are disordered. Phosphoserine occurs at positions 213, 217, 221, 236, and 243. The segment covering 214–224 (PRTSPIMSPRT) has biased composition (polar residues). The Nuclear localization signal signature appears at 251 to 253 (KRR). Phosphoserine occurs at positions 255, 268, 274, 276, 280, 326, 330, and 363. The segment covering 264–281 (PPGASPQRSRSPSPQPSS) has biased composition (low complexity). The stretch at 272-286 (SRSPSPQPSSHVAPQ) is one 3; approximate repeat. The 183-residue stretch at 392-574 (ASLPPLEWPL…NPIECSQRSA (183 aa)) folds into the RHD domain. The DNA-binding element occupies 421–428 (RAHYETEG). The Nuclear localization signal signature appears at 664 to 666 (KRK). Phosphoserine is present on residues Ser755, Ser757, Ser759, Ser856, and Ser859. Positions 839 to 894 (PGTTRPGPPPVSQGQRLSPGSYPTVIQQQNATSQRAAKNGPPVSDQKEVLPAGVTI) are disordered. Residues 862-874 (TVIQQQNATSQRA) are compositionally biased toward polar residues. Positions 904-913 (YLDDVNEIIR) match the Nuclear export signal motif.

Member of the multicomponent NFATC transcription complex that consists of at least two components, a pre-existing cytoplasmic component NFATC2 and an inducible nuclear component NFATC1. Other members such as NFATC4, NFATC3 or members of the activating protein-1 family, MAF, GATA4 and Cbp/p300 can also bind the complex. The phosphorylated form specifically interacts with XPO1; which mediates nuclear export. NFATC proteins bind to DNA as monomers. Interacts with NFATC2IP. Interacts with FOXP3. Interacts with TBX21 ('Thr-303' phosphorylated form). Interacts with KAT2A. Interacts with HOMER2 and HOMER3; this interaction competes with calcineurin/PPP3CA-binding and hence prevents NFATC2 dephosphorylation and activation. Interacts with protein phosphatase PPP3CA/calcineurin A. Interacts with AKAP5 (via leucine zipper domain); this is required for NFATC2/NFAT1 recruitment to CRAC channels. In terms of processing, in resting cells, phosphorylated by NFATC-kinase on at least 18 sites in the 99-363 region. Upon cell stimulation, all these sites except Ser-243 are dephosphorylated by calcineurin. Dephosphorylation induces a conformational change that simultaneously exposes an NLS and masks an NES, which results in nuclear localization. Simultaneously, Ser-53 or Ser-56 is phosphorylated; which is required for full transcriptional activity. Post-translationally, ubiquitinated in endothelial cells by RNF213 downstream of the non-canonical Wnt signaling pathway, leading to its degradation by the proteasome. Expressed in thymus, spleen, heart, testis, brain, placenta, muscle and pancreas. Isoform 1 is highly expressed in the small intestine, heart, testis, prostate, thymus, placenta and thyroid. Isoform 3 is highly expressed in stomach, uterus, placenta, trachea and thyroid.

The protein localises to the cytoplasm. It is found in the nucleus. In terms of biological role, plays a role in the inducible expression of cytokine genes in T-cells, especially in the induction of the IL-2, IL-3, IL-4, TNF-alpha or GM-CSF. Promotes invasive migration through the activation of GPC6 expression and WNT5A signaling pathway. Is involved in the negative regulation of chondrogenesis. Recruited by AKAP5 to ORAI1 pore-forming subunit of CRAC channels in Ca(2+) signaling microdomains where store-operated Ca(2+) influx is coupled to calmodulin and calcineurin signaling and activation of NFAT-dependent transcriptional responses. The polypeptide is Nuclear factor of activated T-cells, cytoplasmic 2 (NFATC2) (Homo sapiens (Human)).